A 76-amino-acid polypeptide reads, in one-letter code: Rhesus theta defensin-1/3 subunit A (76 aa).

A signal peptide spans 1–22 (MRTFALLTAMLLLVALHAQAEA). The propeptide occupies 23 to 64 (RQARADEAAAQQQPGTDDQGMAHSFTWPENAALPLSESAKGL). Residues 25-45 (ARADEAAAQQQPGTDDQGMAH) are disordered. Arginine 65 participates in a covalent cross-link: Cyclopeptide (Arg-Cys) (interchain with C-73 in subunit A); in form RTD-3. Residue arginine 65 forms a Cyclopeptide (Arg-Cys) (interchain with C-73 in subunit B); in form RTD-1 linkage. A disulfide bond links cysteine 68 and cysteine 73. A Cyclopeptide (Cys-Arg) (interchain with R-65 in subunit A); in form RTD-3 cross-link involves residue cysteine 73. Residue cysteine 73 forms a Cyclopeptide (Cys-Arg) (interchain with R-65 in subunit B); in form RTD-1 linkage. A propeptide spanning residues 74-76 (RLL) is cleaved from the precursor.

This sequence belongs to the alpha-defensin family. Theta subfamily. RTD-1 is a cyclic heterodimer composed of subunits A and B; disulfide-linked. RTD-3 is a cyclic homodimer composed of two subunits A; disulfide-linked. Forms a cyclic peptide with subunit A (RTD-3) or with subunit B (RTD-1). An additional intersubunit disulfide bond is formed. RTD-1 is expressed in bone marrow. Detected in promyelocytes, myelocytes and mature neutrophils and monocytes.

In terms of biological role, RTD-1 and RTD-3 have similar antimicrobial activities against the Gram-positive bacteria S.aureus 502A and L.monocytogenes, the Gram-negative bacteria S.typhimurium and E.coli ML35, and the fungi C.albicans 16820 and C.neoformans 271A. The protein is Rhesus theta defensin-1/3 subunit A (RTD1A) of Macaca mulatta (Rhesus macaque).